A 529-amino-acid chain; its full sequence is hal-like protein DDB_G0273787/DDB_G0273081 (529 aa).

The segment at residues 151 to 153 is a cross-link (5-imidazolinone (Ala-Gly)); sequence ASG. Ser-152 is subject to 2,3-didehydroalanine (Ser).

This sequence belongs to the PAL/histidase family. Contains an active site 4-methylidene-imidazol-5-one (MIO), which is formed autocatalytically by cyclization and dehydration of residues Ala-Ser-Gly.

The protein resides in the cytoplasm. The catalysed reaction is L-histidine = trans-urocanate + NH4(+). Its pathway is amino-acid degradation; L-histidine degradation into L-glutamate; N-formimidoyl-L-glutamate from L-histidine: step 1/3. This chain is hal-like protein DDB_G0273787/DDB_G0273081, found in Dictyostelium discoideum (Social amoeba).